A 368-amino-acid chain; its full sequence is MTTKFFIGTAIAVSVLSACSSLEERQIASGNFEYTKQQPGHDIQVPADVDRPNFSQAYKLPALDADAPRNFIGKKLKVVSPALVLPLVTGSHVDDGSKDAKVFFDQVDDSQPLDTTIWNSLLSYLEEQGIGIESFDKDKQRLVTDWVVAKEILDDHWYSWSSVERDTSQRFEFDLEMKPHGRTATLNAHLVDYKERQGEAVVAEKSDVDSRAKEVDILNKVIGHYEYQIRVADAKRLREIRRGMQITIGQDGEDAPAFIIDSNYDTAWPRVLLVLRKLGFDVKDYDKSNGLLFVKYNGTESGWWDSVWSNDENALPLEKQEYRFRVEDAGEHTSLTVLDNESTPFTKDKLSGLYDVFARVMADDNLDI.

The N-terminal stretch at 1–18 (MTTKFFIGTAIAVSVLSA) is a signal peptide. Cys-19 carries the N-palmitoyl cysteine lipid modification. Residue Cys-19 is the site of S-diacylglycerol cysteine attachment.

This sequence belongs to the BamC family. Part of the Bam complex.

It localises to the cell outer membrane. In terms of biological role, part of the outer membrane protein assembly complex, which is involved in assembly and insertion of beta-barrel proteins into the outer membrane. The chain is Outer membrane protein assembly factor BamC from Pseudoalteromonas atlantica (strain T6c / ATCC BAA-1087).